A 678-amino-acid chain; its full sequence is MTKNLLVELGLEELPAYVVTPSEKQLGEKMAAFLKENRLSFEAIQTFSTPRRLAVRVTGLSDKQSDLTEDFKGPAKKIALDSDGNFTKAAQGFVRGKGLTVEDIEFREIKGEEYVYVTKEEVGQAVEAIVPGVVDVLKSLTFPVSMHWAGNSFEYIRPVHTLTVLLDEQEFDLDFLDIKGGRVSRGHRFLGKETKIQSALSYEEDLRKQFVIADPCEREQMIVDQIKKIEAKHGVRIEIDADLLNEVLNLVEYPTAFMGSFDAKYLEVPEEVLVTSMKEHQRYFVVRDQDGKLLPNFISVRNGNAERLKNVIKGNEKVLVARLEDGEFFWREDQKLVISDLVEKLNNVTFHEKIGSLREHMIRTGQITVLLAEKAGLSVDETVDLARAAAIYKFDLLTGMVGEFDELQGIMGEKYTLLAGETPAVAAAIREHYMPTSAEGELPESKVGAVLAIADKLDTILSFFSVGLIPSGSNDPYALRRATQGVVRILDAFGWHIAMDELIDSLYALKFDSLTYENKAEVMDFIKARVDKMMGSTPKDIKEAVLAGSNFVVADMLEAASALVEVSKEEDFKPSVESLSRAFNLAEKAEGVATVDSALFENDQEKALAEAVETLVLSGPASQQLKQLFALSPVIDAFFENTMVMAEDQAVRQNRLAILSQLTKKAAKFACFNQINTK.

The protein belongs to the class-II aminoacyl-tRNA synthetase family. Tetramer of two alpha and two beta subunits.

It localises to the cytoplasm. The enzyme catalyses tRNA(Gly) + glycine + ATP = glycyl-tRNA(Gly) + AMP + diphosphate. In Streptococcus pneumoniae (strain ATCC BAA-255 / R6), this protein is Glycine--tRNA ligase beta subunit.